We begin with the raw amino-acid sequence, 350 residues long: Secreted effector protein PipB2 (350 aa).

4 consecutive Pentapeptide repeat domains span residues 162–201 (ANLT…NLSG), 202–241 (TSLG…SLLG), 247–286 (CNCS…IMED), and 287–326 (AVLT…TLTH).

In terms of assembly, interacts with the host kinesin light chain (KLC), a subunit of the kinesin-1 motor complex.

The protein localises to the secreted. Its subcellular location is the host membrane. Functionally, effector proteins function to alter host cell physiology and promote bacterial survival in host tissues. Involved in the reorganization of late endosome/lysosome (LE/Lys) compartments in mammalian cells. Necessary and sufficient to link kinesin-1 onto the Salmonella-containing vacuole (SCV) membrane. Required for centrifugal extension of lysosomal glycoprotein-rich membrane tubules, known as Salmonella-induced filaments (Sifs), away from the SCV and toward the cell periphery. Required for virulence, but not for intracellular survival and replication in phagocytic cells. The polypeptide is Secreted effector protein PipB2 (pipB2) (Salmonella paratyphi A (strain ATCC 9150 / SARB42)).